Reading from the N-terminus, the 185-residue chain is Acireductone dioxygenase (185 aa).

Fe(2+)-binding residues include histidine 96, histidine 98, glutamate 102, and histidine 140. Ni(2+)-binding residues include histidine 96, histidine 98, glutamate 102, and histidine 140.

It belongs to the acireductone dioxygenase (ARD) family. Monomer. Requires Fe(2+) as cofactor. Ni(2+) serves as cofactor.

It catalyses the reaction 1,2-dihydroxy-5-(methylsulfanyl)pent-1-en-3-one + O2 = 3-(methylsulfanyl)propanoate + CO + formate + 2 H(+). The catalysed reaction is 1,2-dihydroxy-5-(methylsulfanyl)pent-1-en-3-one + O2 = 4-methylsulfanyl-2-oxobutanoate + formate + 2 H(+). It functions in the pathway amino-acid biosynthesis; L-methionine biosynthesis via salvage pathway; L-methionine from S-methyl-5-thio-alpha-D-ribose 1-phosphate: step 5/6. In terms of biological role, catalyzes 2 different reactions between oxygen and the acireductone 1,2-dihydroxy-3-keto-5-methylthiopentene (DHK-MTPene) depending upon the metal bound in the active site. Fe-containing acireductone dioxygenase (Fe-ARD) produces formate and 2-keto-4-methylthiobutyrate (KMTB), the alpha-ketoacid precursor of methionine in the methionine recycle pathway. Ni-containing acireductone dioxygenase (Ni-ARD) produces methylthiopropionate, carbon monoxide and formate, and does not lie on the methionine recycle pathway. This chain is Acireductone dioxygenase, found in Marinobacter nauticus (strain ATCC 700491 / DSM 11845 / VT8) (Marinobacter aquaeolei).